A 1207-amino-acid chain; its full sequence is Ras GTPase-activating protein gap-2 (1207 aa).

Disordered stretches follow at residues 1-29 and 221-316; these read MKVI…SCTK and RMSS…GSLR. The 344-residue stretch at 40–383 folds into the PH domain; the sequence is PPICHGWLIV…WMENLRKTMN (344 aa). Residues 223–236 are compositionally biased toward low complexity; that stretch reads SSSSHNLSTRLSGS. 2 stretches are compositionally biased toward polar residues: residues 237-247 and 286-297; these read TQNLNQPTNAY and ASNTPSRDSSLY. Residues 374–490 form the C2 domain; sequence WMENLRKTMN…SSRSPVERWY (117 aa). Over residues 495–504 the composition is skewed to polar residues; sequence SHSDSGTSRI. The disordered stretch occupies residues 495 to 516; it reads SHSDSGTSRIASALGGKSSSQE. The Ras-GAP domain maps to 579–789; the sequence is NLAKEFLCDL…HRMKDFLLRI (211 aa). 4 disordered regions span residues 856 to 903, 923 to 1013, 1086 to 1107, and 1163 to 1207; these read GVFH…LGRS, FQTP…SSSS, ATGG…RASR, and LKSK…VVPN. Polar residues-rich tracts occupy residues 862–876 and 891–903; these read MVQQ…SPQQ and TPPT…LGRS. The span at 939 to 953 shows a compositional bias: low complexity; it reads TGTSSSRTSDKTTSS. Residues 955–972 show a composition bias toward basic and acidic residues; sequence EIRDDTDSDFELREDRGR. Residues 985–1013 are compositionally biased toward low complexity; that stretch reads ASPSSSQQASSGYLSNNPSRSSYSNSSSS. Low complexity predominate over residues 1181–1207; the sequence is SGASEDSYDSLSSLDRPSRQSLVVVPN.

Mainly expressed in gonads and vulval cells. Isoform c in expressed in pharyngeal epithelial cells and several rectal/blast cells in the tail region. Isoform f is weakly expressed in four cells symmetrically located in the vulval region. Isoform g is strongly expressed in the pharyngeal muscle cells m6 in addition to several cells in the tail region.

The protein resides in the cytoplasm. In terms of biological role, GTPase-activating protein, which acts as a negative regulator for the member of the Ras family let-60. Probably decreases the signaling activity of Ras by stimulating its intrinsic GTPase activity, thereby lowering the levels of GTP-bound, active Ras. The different isoforms may play a distinct role in specific tissues. The polypeptide is Ras GTPase-activating protein gap-2 (gap-2) (Caenorhabditis elegans).